A 388-amino-acid polypeptide reads, in one-letter code: Quinolone resistance protein NorA (388 aa).

Helical transmembrane passes span Ile-5–Val-25, Leu-42–Ala-62, Leu-69–His-89, Val-99–Val-119, Phe-129–Phe-149, Met-157–Ile-177, Trp-201–Phe-221, Asp-239–Phe-259, Leu-269–Ala-289, Trp-293–Ile-313, Leu-331–Phe-351, and Ile-355–Ile-375.

This sequence belongs to the major facilitator superfamily. TCR/Tet family.

The protein resides in the cell membrane. Involved in quinolone resistance. May constitute a membrane-associated active efflux pump of hydrophilic quinolones. The chain is Quinolone resistance protein NorA (norA) from Staphylococcus aureus (strain MRSA252).